The chain runs to 402 residues: Argininosuccinate synthase (402 aa).

Residues A11–S19 and A39 contribute to the ATP site. Y90 and S95 together coordinate L-citrulline. G120 is a binding site for ATP. Positions 122, 126, and 127 each coordinate L-aspartate. N126 lines the L-citrulline pocket. R130, S179, S188, E264, and Y276 together coordinate L-citrulline.

It belongs to the argininosuccinate synthase family. Type 1 subfamily. In terms of assembly, homotetramer.

Its subcellular location is the cytoplasm. The catalysed reaction is L-citrulline + L-aspartate + ATP = 2-(N(omega)-L-arginino)succinate + AMP + diphosphate + H(+). The protein operates within amino-acid biosynthesis; L-arginine biosynthesis; L-arginine from L-ornithine and carbamoyl phosphate: step 2/3. The sequence is that of Argininosuccinate synthase from Roseiflexus castenholzii (strain DSM 13941 / HLO8).